The chain runs to 202 residues: Recoverin (202 aa).

A lipid anchor (N-myristoyl glycine) is attached at G2. Cysteine sulfenic acid (-SOH) is present on C39. EF-hand domains are found at residues 41–59 (SGRITRQEFESIYSKFFPD), 61–96 (DPKAYAQHVFRSFDANSDGTLDFKEYVIALHMTTAG), 97–132 (KPTQKLEWAFSLYDVDGNGTISKNEVLEIVMAIFKM), and 147–182 (TPEKRAEKIWAFFGKKEDDKLTEEEFIEGTLANKEI). Positions 74, 76, 78, 80, 85, 110, 112, 114, 116, and 121 each coordinate Ca(2+). The interaction with GRK1 stretch occupies residues 189 to 192 (EPQK).

The protein belongs to the recoverin family. In terms of assembly, homodimer; disulfide-linked. Homodimerization is caused by prolonged intense illumination. May form a complex composed of RHO, GRK1 and RCVRN in a Ca(2+)-dependent manner; RCVRN prevents the interaction between GRK1 and RHO. Interacts (via C-terminus) with GRK1 (via N-terminus); the interaction is Ca(2+)-dependent. In terms of processing, the N-terminal glycine is linked to one of four different types of acyl groups. The most abundant is myristoleate (14:1), but 14:0, 14:2, and 12:0 acyl residues are also present. The Ca(2+) induced exposure of the myristoyl group, known as the calcium-myristoyl switch, promotes RCVRN binding to the photoreceptor cell membranes only when intracellular Ca(2+) concentration is high. Oxidation on Cys-39 occurs in response to prolonged intense illumination and results in the formation of disulfide homodimers, and to a lesser extent disulfide-linked heterodimers. As to expression, expressed in rod photoreceptors in the retina (at protein level).

It localises to the photoreceptor inner segment. The protein resides in the cell projection. It is found in the cilium. The protein localises to the photoreceptor outer segment. Its subcellular location is the photoreceptor outer segment membrane. It localises to the perikaryon. Functionally, acts as a calcium sensor and regulates phototransduction of cone and rod photoreceptor cells. Modulates light sensitivity of cone photoreceptor in dark and dim conditions. In response to high Ca(2+) levels induced by low light levels, prolongs RHO/rhodopsin activation in rod photoreceptor cells by binding to and inhibiting GRK1-mediated phosphorylation of RHO/rhodopsin. Plays a role in scotopic vision/enhances vision in dim light by enhancing signal transfer between rod photoreceptors and rod bipolar cells. Improves rod photoreceptor sensitivity in dim light and mediates response of rod photoreceptors to facilitate detection of change and motion in bright light. The protein is Recoverin (Rcvrn) of Mus musculus (Mouse).